A 166-amino-acid chain; its full sequence is Protein SprT (166 aa).

Positions 20–164 (EHLANANRKL…CVRCGDLLVA (145 aa)) constitute a SprT-like domain. Histidine 78 is a binding site for Zn(2+). The active site involves glutamate 79. Histidine 82 is a binding site for Zn(2+).

It belongs to the SprT family. The cofactor is Zn(2+).

The protein localises to the cytoplasm. This Klebsiella pneumoniae subsp. pneumoniae (strain ATCC 700721 / MGH 78578) protein is Protein SprT.